The sequence spans 376 residues: Putative type I restriction enzyme MpnIIP endonuclease subunit N-terminal part (376 aa).

In terms of biological role, the N-terminal section of a putative type I restriction enzyme that if reconstituted might recognize 5'-GAN(7)TAY-3' and cleave a random distance away. Subunit R is required for both nuclease and ATPase activities, but not for modification. The chain is Putative type I restriction enzyme MpnIIP endonuclease subunit N-terminal part from Mycoplasma pneumoniae (strain ATCC 29342 / M129 / Subtype 1) (Mycoplasmoides pneumoniae).